Consider the following 123-residue polypeptide: Small ribosomal subunit protein uS8 (123 aa).

Belongs to the universal ribosomal protein uS8 family. As to quaternary structure, part of the 30S ribosomal subunit. Contacts proteins S5 and S12.

One of the primary rRNA binding proteins, it binds directly to 16S rRNA central domain where it helps coordinate assembly of the platform of the 30S subunit. The sequence is that of Small ribosomal subunit protein uS8 (rpsH) from Carsonella ruddii (strain PV).